The following is a 528-amino-acid chain: GMP synthase [glutamine-hydrolyzing] (528 aa).

The region spanning Ser13–Asp204 is the Glutamine amidotransferase type-1 domain. Catalysis depends on Cys90, which acts as the Nucleophile. Residues His178 and Glu180 contribute to the active site. One can recognise a GMPS ATP-PPase domain in the interval Trp205–Arg403. Residue Ser232–Ser238 participates in ATP binding.

Homodimer.

The enzyme catalyses XMP + L-glutamine + ATP + H2O = GMP + L-glutamate + AMP + diphosphate + 2 H(+). It functions in the pathway purine metabolism; GMP biosynthesis; GMP from XMP (L-Gln route): step 1/1. Functionally, catalyzes the synthesis of GMP from XMP. In Prochlorococcus marinus (strain MIT 9312), this protein is GMP synthase [glutamine-hydrolyzing].